We begin with the raw amino-acid sequence, 324 residues long: Zinc finger C2HC domain-containing protein 1A (324 aa).

The C2HC/C3H-type 1 zinc finger occupies 15–44 (DLLPCKICGRTFFPLALKKHGPICQKTATK). Residues Cys-19, Cys-22, His-34, and Cys-38 each contribute to the Zn(2+) site. The segment at 43–83 (TKKRKTFDSSRQRAEGTDIPTVKPLKPRPEPPKKPSNWRRK) is disordered. Residues 48 to 58 (TFDSSRQRAEG) are compositionally biased toward basic and acidic residues. Residues 118 to 147 (DYIQCPYCQRRFNENAADRHINFCKEQAAR) form a C2HC/C3H-type 2 zinc finger. Zn(2+) is bound by residues Cys-122, Cys-125, His-137, and Cys-141. The interval 149-225 (SNKGKFSTDS…NKPQTLSPSH (77 aa)) is disordered. The segment covering 176–187 (SNPPGIPSSGSS) has biased composition (low complexity). Composition is skewed to polar residues over residues 188-198 (RLPQPSTTSKT) and 206-223 (KASS…TLSP). Ser-222 is modified (phosphoserine). At Thr-243 the chain carries Phosphothreonine. Ser-291 carries the phosphoserine modification.

It belongs to the ZC2HC1 family. Zn(2+) is required as a cofactor.

The sequence is that of Zinc finger C2HC domain-containing protein 1A (Zc2hc1a) from Mus musculus (Mouse).